Here is a 498-residue protein sequence, read N- to C-terminus: uncharacterized protein (498 aa).

The signal sequence occupies residues 1 to 26 (MEESSMAQASLICLLLSFSIIMLSNA). The Extracellular segment spans residues 27 to 441 (ADISIDCGSS…GEEKSSSNLA (415 aa)). N-linked (GlcNAc...) asparagine glycosylation is found at Asn44, Asn150, Asn354, and Asn357. The segment at 351–439 (GSGNGTNSTS…KSGEEKSSSN (89 aa)) is disordered. Residues 362–414 (SGGGSPSPGGGSGSPPSTGGGSGSPPSTGGGGGSPSKGGGGGKSGGSNNGDGG) are compositionally biased toward gly residues. Positions 418 to 436 (ASEDEKSADSSGKSGEEKS) are enriched in basic and acidic residues. Residues 442-462 (LPLGISLPTLLSLGAGGWGVW) traverse the membrane as a helical segment. Residues 463-498 (KYFIKPRRHPESELPLKQNISLQVNMGNATVVNAGQ) are Cytoplasmic-facing.

Its subcellular location is the membrane. This is an uncharacterized protein from Arabidopsis thaliana (Mouse-ear cress).